The following is a 388-amino-acid chain: Endoglucanase 3 (388 aa).

The signal sequence occupies residues 1 to 16; the sequence is MKHSVLAGLFATGALA. The CBM1 domain maps to 17-52; the sequence is QGGAWQQCGGVGFSGSTSCVSGYTCVYLNDWYSQCQ. Cystine bridges form between Cys-24–Cys-41 and Cys-35–Cys-51. Residues 53–91 are linker; it reads PQPTTLRTTTTPGATSTTRSAPAATSTTPAKGKFKWFGI. Residues 56-81 form a disordered region; the sequence is TTLRTTTTPGATSTTRSAPAATSTTP. Asn-92 and Asn-155 each carry an N-linked (GlcNAc...) asparagine glycan. The interval 92–388 is catalytic; it reads NQSCAEFGKG…YNSLLKKYVP (297 aa). Glu-215 acts as the Proton donor in catalysis. The N-linked (GlcNAc...) asparagine glycan is linked to Asn-259. Glu-322 functions as the Nucleophile in the catalytic mechanism.

Belongs to the glycosyl hydrolase 5 (cellulase A) family.

The enzyme catalyses Endohydrolysis of (1-&gt;4)-beta-D-glucosidic linkages in cellulose, lichenin and cereal beta-D-glucans.. The sequence is that of Endoglucanase 3 (CMC3) from Humicola insolens (Soft-rot fungus).